The primary structure comprises 961 residues: Zinc finger protein basonuclin-1 (961 aa).

Residues 210 to 219 are hydrophobic; that stretch reads MTFMLPFQFF. 2 consecutive C2H2-type zinc fingers follow at residues 325–348 and 353–382; these read VFCT…NAVH and HKCT…PRLH. The interval 370–393 is disordered; that stretch reads RNRHSANPNPRLHMPMNRNNRDKD. Residues 501–507 carry the Nuclear localization signal motif; it reads PKKKSRK. Serine 505 and serine 509 each carry phosphoserine. The disordered stretch occupies residues 523–572; that stretch reads EEKRHSLSSDDEVPLQVVSEDEPEDSSPRSDRVPEEQHTQLSLEEPLPQG. Residues 531–547 are compositionally biased toward acidic residues; sequence SDDEVPLQVVSEDEPED. The segment covering 548-560 has biased composition (basic and acidic residues); it reads SSPRSDRVPEEQH. C2H2-type zinc fingers lie at residues 687 to 711 and 715 to 743; these read FQCD…NTHA and HACT…SLHQ. Residues 810–864 are disordered; sequence ESYNSGPPSEGTILDLSTTSSMKSESSSHSSWDSDGVSEEGTALMEDSDGNCEGQ. A compositionally biased stretch (low complexity) spans 826-844; it reads STTSSMKSESSSHSSWDSD. 2 C2H2-type zinc fingers span residues 895 to 918 and 923 to 950; these read ITCH…KTVH and HKCK…PNLH. A disordered region spans residues 937–961; the sequence is VRSRNRHSQNPNLHKSLASSPSHLQ.

In terms of assembly, interacts with HSF2BP (via C-terminus). Post-translationally, phosphorylation on Ser-505 and Ser-509 leads to cytoplasmic localization. As to expression, epidermis and germ cells of testis and ovary.

The protein resides in the nucleus. It is found in the cytoplasm. It localises to the nucleoplasm. Functionally, transcriptional activator. It is likely involved in the regulation of keratinocytes terminal differentiation in squamous epithelia and hair follicles. Required for the maintenance of spermatogenesis. It is involved in the positive regulation of oocyte maturation, probably acting through the control of BMP15 levels and regulation of AKT signaling cascade. May also play a role in the early development of embryos. The chain is Zinc finger protein basonuclin-1 (Bnc1) from Mus musculus (Mouse).